The following is a 490-amino-acid chain: Cytochrome P450 2W1 (490 aa).

The first 22 residues, 1–22 (MALLLLLFLGLLGLWGLLCACA), serve as a signal peptide directing secretion. Asn-177 carries N-linked (GlcNAc...) asparagine glycosylation. Heme is bound at residue Cys-433.

This sequence belongs to the cytochrome P450 family. Heme is required as a cofactor. As to expression, very low levels are detected in fetal and adult tissues. Highly expressed in several tumor samples, in particular colon and adrenal tumors.

The protein resides in the endoplasmic reticulum lumen. It localises to the cell membrane. The protein localises to the microsome membrane. The catalysed reaction is all-trans-retinoate + reduced [NADPH--hemoprotein reductase] + O2 = all-trans-4-hydroxyretinoate + oxidized [NADPH--hemoprotein reductase] + H2O + H(+). The enzyme catalyses 1-(9Z-octadecenoyl)-sn-glycero-3-phosphocholine + reduced [NADPH--hemoprotein reductase] + O2 = 1-[8-hydroxy-(9Z)-octadecenoyl]-sn-glycero-3-phosphocholine + oxidized [NADPH--hemoprotein reductase] + H2O + H(+). It catalyses the reaction 1-(9Z-octadecenoyl)-sn-glycero-3-phosphocholine + reduced [NADPH--hemoprotein reductase] + O2 = 1-[11-hydroxy-(9Z)-octadecenoyl]-sn-glycero-3-phosphocholine + oxidized [NADPH--hemoprotein reductase] + H2O + H(+). It carries out the reaction 1-(9Z-octadecenoyl)-sn-glycero-3-phosphocholine + reduced [NADPH--hemoprotein reductase] + O2 = 1-[(9S,10R)-epoxy-octadecanoyl]-sn-glycero-3-phosphocholine + oxidized [NADPH--hemoprotein reductase] + H2O + H(+). The catalysed reaction is 1-(9Z-octadecenoyl)-sn-glycero-3-phosphocholine + reduced [NADPH--hemoprotein reductase] + O2 = 1-[(9R,10S)-epoxy-octadecanoyl]-sn-glycero-3-phosphocholine + oxidized [NADPH--hemoprotein reductase] + H2O + H(+). Its function is as follows. A cytochrome P450 monooxygenase that may play a role in retinoid and phospholipid metabolism. Catalyzes the hydroxylation of saturated carbon hydrogen bonds. Hydroxylates all trans-retinoic acid (atRA) to 4-hydroxyretinoate and may regulate atRA clearance. Other retinoids such as all-trans retinol and all-trans retinal are potential endogenous substrates. Catalyzes both epoxidation of double bonds and hydroxylation of carbon hydrogen bonds of the fatty acyl chain of 1-acylphospholipids/2-lysophospholipids. Can metabolize various lysophospholipids classes including lysophosphatidylcholines (LPCs), lysophosphatidylinositols (LPIs), lysophosphatidylserines (LPSs), lysophosphatidylglycerols (LPGs), lysophosphatidylethanolamines (LPEs) and lysophosphatidic acids (LPAs). Has low or no activity toward 2-acylphospholipids/1-lysophospholipids, diacylphospholipids and free fatty acids. May play a role in tumorigenesis by activating procarcinogens such as aflatoxin B1, polycyclic aromatic hydrocarbon dihydrodiols and aromatic amines. Mechanistically, uses molecular oxygen inserting one oxygen atom into a substrate, and reducing the second into a water molecule, with two electrons provided by NADPH via cytochrome P450 reductase (CPR; NADPH-ferrihemoprotein reductase). The sequence is that of Cytochrome P450 2W1 from Homo sapiens (Human).